We begin with the raw amino-acid sequence, 215 residues long: Probable phosphoglycerate mutase GpmB (215 aa).

Substrate contacts are provided by residues 8 to 15 (RHGETQWN), 21 to 22 (QG), arginine 58, lysine 60, 82 to 85 (ELDM), 104 to 105 (RR), and 151 to 152 (GI). The active-site Tele-phosphohistidine intermediate is the histidine 9. The active-site Proton donor/acceptor is the glutamate 82.

This sequence belongs to the phosphoglycerate mutase family. GpmB subfamily.

The catalysed reaction is (2R)-2-phosphoglycerate = (2R)-3-phosphoglycerate. It functions in the pathway carbohydrate degradation; glycolysis; pyruvate from D-glyceraldehyde 3-phosphate: step 3/5. This Salmonella paratyphi A (strain AKU_12601) protein is Probable phosphoglycerate mutase GpmB.